The primary structure comprises 260 residues: Serine protease VLSP-1 (260 aa).

The first 18 residues, 1–18, serve as a signal peptide directing secretion; sequence MVLIRVLANLLVLHLSYA. Positions 19 to 24 are excised as a propeptide; the sequence is QKSSEL. Residues 25-251 enclose the Peptidase S1 domain; it reads VIGGDECNIN…YSDWIQSIIA (227 aa). 6 disulfides stabilise this stretch: Cys-31–Cys-165, Cys-52–Cys-68, Cys-100–Cys-258, Cys-144–Cys-212, Cys-176–Cys-191, and Cys-202–Cys-227. A glycan (N-linked (GlcNAc...) asparagine) is linked at Asn-44. The active-site Charge relay system is the His-67. An N-linked (GlcNAc...) asparagine glycan is attached at Asn-103. The Charge relay system role is filled by Asp-112. The N-linked (GlcNAc...) asparagine glycan is linked to Asn-156. Catalysis depends on Ser-206, which acts as the Charge relay system.

Belongs to the peptidase S1 family. Snake venom subfamily. Expressed by the venom gland.

Its subcellular location is the secreted. Functionally, snake venom serine protease that may act in the hemostasis system of the prey. The polypeptide is Serine protease VLSP-1 (Macrovipera lebetinus (Levantine viper)).